A 637-amino-acid polypeptide reads, in one-letter code: DNA mismatch repair protein MutL (637 aa).

This sequence belongs to the DNA mismatch repair MutL/HexB family.

In terms of biological role, this protein is involved in the repair of mismatches in DNA. It is required for dam-dependent methyl-directed DNA mismatch repair. May act as a 'molecular matchmaker', a protein that promotes the formation of a stable complex between two or more DNA-binding proteins in an ATP-dependent manner without itself being part of a final effector complex. This is DNA mismatch repair protein MutL from Actinobacillus succinogenes (strain ATCC 55618 / DSM 22257 / CCUG 43843 / 130Z).